Reading from the N-terminus, the 99-residue chain is Nucleoid-associated protein MGAS2096_Spy1605 (99 aa).

The protein belongs to the YbaB/EbfC family. Homodimer.

It is found in the cytoplasm. It localises to the nucleoid. Its function is as follows. Binds to DNA and alters its conformation. May be involved in regulation of gene expression, nucleoid organization and DNA protection. This Streptococcus pyogenes serotype M12 (strain MGAS2096) protein is Nucleoid-associated protein MGAS2096_Spy1605.